The primary structure comprises 248 residues: MTYKLILLRHGHSEWNAKNLFTGWVDVDLNDQGREEAARGGELLVENNVLPDVLYTSLLKRAINTANIALDKADRGWIPVKRDWRLNERHYGALQGKDKAQTLAEYGEEQFMEWRRSYDTPPPPLDDDSEFSQAHDPRYADLGDALPRTECLKDVLIRLMPYWESDIKEDLKAGKTVLVTAHGNSLRALVKHLDGISDEAIAGLNIPTGIPLVYDLDENFKPLNPGGTYLDPEAAAESIKAVANQGKK.

Substrate is bound by residues 9–16 (RHGHSEWN), 22–23 (TG), arginine 61, 88–91 (ERHY), lysine 99, 115–116 (RR), and 183–184 (GN). The Tele-phosphohistidine intermediate role is filled by histidine 10. Glutamate 88 (proton donor/acceptor) is an active-site residue.

The protein belongs to the phosphoglycerate mutase family. BPG-dependent PGAM subfamily.

The catalysed reaction is (2R)-2-phosphoglycerate = (2R)-3-phosphoglycerate. It participates in carbohydrate degradation; glycolysis; pyruvate from D-glyceraldehyde 3-phosphate: step 3/5. Its function is as follows. Catalyzes the interconversion of 2-phosphoglycerate and 3-phosphoglycerate. The protein is 2,3-bisphosphoglycerate-dependent phosphoglycerate mutase of Arthrobacter sp. (strain FB24).